The following is a 148-amino-acid chain: UPF0178 protein CA_C2825 (148 aa).

The protein belongs to the UPF0178 family.

This is UPF0178 protein CA_C2825 from Clostridium acetobutylicum (strain ATCC 824 / DSM 792 / JCM 1419 / IAM 19013 / LMG 5710 / NBRC 13948 / NRRL B-527 / VKM B-1787 / 2291 / W).